The sequence spans 812 residues: Zn(2)-C6 fungal-type transcription factor pigI (812 aa).

The segment at 42–74 (GCLHPRSPPRDRTAMADNSNSSPPASRRREKPQ) is disordered. The segment at residues 77–105 (CTLCRRRKLRCDRRQPCETCVRRGLSLSC) is a DNA-binding region (zn(2)-C6 fungal-type).

The protein resides in the nucleus. Functionally, zn(2)-C6 fungal-type transcription factor; part of the gene cluster that mediates the biosynthesis of azaphilone pigments (MonAzPs), a complex mixture of compounds with a common azaphilone skeleton very widely used as food colorants. Acts probably as a negative regulator of the azaphilone pigments (MonAzPs) gene cluster. The chain is Zn(2)-C6 fungal-type transcription factor pigI from Monascus ruber (Mold).